The chain runs to 913 residues: Trafficking kinesin-binding protein 2 (913 aa).

Polar residues predominate over residues 11–21; it reads SQTGEENLMSS. The interval 11 to 31 is disordered; that stretch reads SQTGEENLMSSNHRDSESITD. An HAP1 N-terminal domain is found at 48–353; that stretch reads EEQLPQYKLR…QEEIKELRNK (306 aa). Residues 134 to 355 are a coiled coil; it reads QALLKRNHVL…EIKELRNKAG (222 aa). The interaction with HGS stretch occupies residues 359 to 507; the sequence is HLCFSQAYGV…KQFFAEEWER (149 aa). Residues 442–478 form a disordered region; sequence ESGVQQTEDKTLPNQGSSTEVPGNSHPRDPPGLPEDS. Residues 453–463 are compositionally biased toward polar residues; sequence LPNQGSSTEVP. The stretch at 502–519 forms a coiled coil; that stretch reads AEEWERKLQILAEQEEEV. Low complexity-rich tracts occupy residues 688 to 704 and 780 to 789; these read SSGF…GSAS and PSQSPCSSPV. 2 disordered regions span residues 688–707 and 769–790; these read SSGF…SNTA and ALAT…SPVP.

This sequence belongs to the milton family. In terms of assembly, interacts with RHOT1/Miro-1 and RHOT2/Miro-2. Interacts with GABA-A receptor and O-GlcNAc transferase. Interacts with HGS. O-glycosylated. As to expression, present in heart and brain (at protein level).

It is found in the cytoplasm. The protein resides in the early endosome. Its subcellular location is the mitochondrion. In terms of biological role, may regulate endosome-to-lysosome trafficking of membrane cargo, including EGFR. In Rattus norvegicus (Rat), this protein is Trafficking kinesin-binding protein 2 (Trak2).